A 499-amino-acid chain; its full sequence is Serine carboxypeptidase-like 34 (499 aa).

The first 25 residues, 1–25 (MGSHSVEFSVLVLFLVSFLLGSTSA), serve as a signal peptide directing secretion. Asn-73, Asn-124, and Asn-158 each carry an N-linked (GlcNAc...) asparagine glycan. 3 disulfide bridges follow: Cys-106–Cys-383, Cys-269–Cys-280, and Cys-304–Cys-351. The active site involves Ser-200. Residues Asn-310, Asn-372, and Asn-375 are each glycosylated (N-linked (GlcNAc...) asparagine). Active-site residues include Asp-419 and His-471.

The protein belongs to the peptidase S10 family. As to expression, ubiquitous.

It localises to the secreted. Functionally, probable carboxypeptidase. The polypeptide is Serine carboxypeptidase-like 34 (SCPL34) (Arabidopsis thaliana (Mouse-ear cress)).